A 335-amino-acid chain; its full sequence is Acetyl-coenzyme A carboxylase carboxyl transferase subunit alpha (335 aa).

Residues 38–292 (TLEQKAEELR…ATALSEEIEN (255 aa)) enclose the CoA carboxyltransferase C-terminal domain.

The protein belongs to the AccA family. Acetyl-CoA carboxylase is a heterohexamer composed of biotin carboxyl carrier protein (AccB), biotin carboxylase (AccC) and two subunits each of ACCase subunit alpha (AccA) and ACCase subunit beta (AccD).

Its subcellular location is the cytoplasm. The catalysed reaction is N(6)-carboxybiotinyl-L-lysyl-[protein] + acetyl-CoA = N(6)-biotinyl-L-lysyl-[protein] + malonyl-CoA. It functions in the pathway lipid metabolism; malonyl-CoA biosynthesis; malonyl-CoA from acetyl-CoA: step 1/1. Its function is as follows. Component of the acetyl coenzyme A carboxylase (ACC) complex. First, biotin carboxylase catalyzes the carboxylation of biotin on its carrier protein (BCCP) and then the CO(2) group is transferred by the carboxyltransferase to acetyl-CoA to form malonyl-CoA. This Heliobacterium modesticaldum (strain ATCC 51547 / Ice1) protein is Acetyl-coenzyme A carboxylase carboxyl transferase subunit alpha.